Here is an 80-residue protein sequence, read N- to C-terminus: UPF0291 protein LACR_1198 (80 aa).

The protein belongs to the UPF0291 family.

The protein localises to the cytoplasm. The sequence is that of UPF0291 protein LACR_1198 from Lactococcus lactis subsp. cremoris (strain SK11).